We begin with the raw amino-acid sequence, 114 residues long: Iron-sulfur cluster insertion protein ErpA (114 aa).

Positions 42, 106, and 108 each coordinate iron-sulfur cluster.

The protein belongs to the HesB/IscA family. Homodimer. It depends on iron-sulfur cluster as a cofactor.

Functionally, required for insertion of 4Fe-4S clusters for at least IspG. This is Iron-sulfur cluster insertion protein ErpA from Serratia proteamaculans (strain 568).